A 459-amino-acid polypeptide reads, in one-letter code: MSNGKIVQIIGAVVDVEFPRDAMPKVMEALKMQAPELTFEVQQQLGDGVVRTIAMGSTDGLRRGMDVLSTGNPIMVPVGQKTLGRIMNVLGDPVDEAGPIGAETTMPIHRKAPAYADQAATVEILETGIKVIDLIMPIAKGGKVGLFGGAGVGKTVTLMELIRNIAVQHSGFSVFAGVGERTREGNDFYHEMKEGGVLDKVALVYGQMNEPPGNRLRVALTGLTMAEYFRDEGRDVLLFVDNIYRYTLAGTEVSALLGRMPSAVGYQPTLADEMGRLQERITSTKTGSITSFQAVYVPADDLTDPSPATTFAHLDATLVLSRQVAELGIYPAVDPLDSTSRILDPQVVGEEHYTVARKVQGTLQKYKELRDIIAILGMDELSPEDKLAVSRARKLQRFLSQPFFVAEVFTGAPGKYVTLKDTIAGFKAIVEGEYDHLPEQAFYMVGGIEEAVEKAKTIQ.

Residue 148-155 (GGAGVGKT) participates in ATP binding.

It belongs to the ATPase alpha/beta chains family. In terms of assembly, F-type ATPases have 2 components, CF(1) - the catalytic core - and CF(0) - the membrane proton channel. CF(1) has five subunits: alpha(3), beta(3), gamma(1), delta(1), epsilon(1). CF(0) has three main subunits: a(1), b(2) and c(9-12). The alpha and beta chains form an alternating ring which encloses part of the gamma chain. CF(1) is attached to CF(0) by a central stalk formed by the gamma and epsilon chains, while a peripheral stalk is formed by the delta and b chains.

The protein localises to the cell inner membrane. It carries out the reaction ATP + H2O + 4 H(+)(in) = ADP + phosphate + 5 H(+)(out). In terms of biological role, produces ATP from ADP in the presence of a proton gradient across the membrane. The catalytic sites are hosted primarily by the beta subunits. The sequence is that of ATP synthase subunit beta from Thiobacillus denitrificans (strain ATCC 25259 / T1).